The chain runs to 132 residues: Small ribosomal subunit protein uS8 (132 aa).

The protein belongs to the universal ribosomal protein uS8 family. In terms of assembly, part of the 30S ribosomal subunit. Contacts proteins S5 and S12.

Functionally, one of the primary rRNA binding proteins, it binds directly to 16S rRNA central domain where it helps coordinate assembly of the platform of the 30S subunit. This chain is Small ribosomal subunit protein uS8, found in Micrococcus luteus (strain ATCC 4698 / DSM 20030 / JCM 1464 / CCM 169 / CCUG 5858 / IAM 1056 / NBRC 3333 / NCIMB 9278 / NCTC 2665 / VKM Ac-2230) (Micrococcus lysodeikticus).